Here is a 671-residue protein sequence, read N- to C-terminus: Heat shock transcription factor hsf-1 (671 aa).

Composition is skewed to low complexity over residues 1-17 (MQPT…QQQQ) and 38-52 (QQAP…NHQN). The tract at residues 1–61 (MQPTGNQIQQ…NGAIGGKKSS (61 aa)) is disordered. Residues 89–196 (LPVFLIKLWN…LLSQIKRKQS (108 aa)) form a DNA-binding domain region. Residues 206-240 (NEQTQQNLEVVMAEMRAMREKAKNMEDKMNKLTKE) are a coiled coil. Disordered regions lie at residues 329–423 (QEPF…PLTH), 437–493 (YQGA…VNNY), 526–552 (HHPT…GLSP), and 612–671 (NAPE…PNLV). The segment covering 370 to 386 (GAQSSRYSDGGATSSRE) has biased composition (polar residues). Positions 439-456 (GASPASGGPSTSSSAPSG) are enriched in low complexity. Polar residues-rich tracts occupy residues 474–493 (ATRQ…VNNY) and 528–552 (PTTS…GLSP).

Belongs to the HSF family. Forms homodimers and homotrimers. Component of the DHIC (ddl-1-containing hsf-1 inhibitory complex), which contains at least ddl-1, ddl-2, hsb-1 and hsf-1. Within the complex, interacts with ddl-1. Formation of the DHIC may be dependent upon the Insulin/IGF-1-like signaling (IIS) mediated pathway. Phosphorylated. Post-translationally, sumoylated. Sumoylation may inhibit transcriptional activity in response to heat shock. Expressed in intestinal cells, body wall muscle cells, and hypodermal cells, as well as many neurons in the head and tail.

It localises to the nucleus. Its subcellular location is the cytoplasm. Functionally, functions as a stress-inducible and DNA-binding transcription factor, playing a central role in the transcriptional activation of the heat shock response (HSR), leading to the expression of a large class of molecular chaperones, heat shock proteins (HSPs), that protect cells from cellular insult damage. Upon exposure to heat and other stress stimuli, activates gene transcription through binding to site-specific heat shock elements (HSEs) present in the promoter regions of target genes, such as the HSPs. Binds to inverted 5'-NGAAN-3' pentamer DNA sequences in HSEs. Involved in positive modulation of expression of heat shock protein hsp-16.2 in response to heat shock; may act in concert with homeodomain-interacting protein kinase hpk-1. In response to heat shock or starvation, required for the modulation of lifespan, and protection against aberrant protein aggregation proteotoxicity; may act in parallel with the Insulin/IGF-1-like signaling (IIS) mediated pathway. Plays a role in modulating autophagy, in response to a moderate and short-term heat shock, also known as a hormetic heat shock. Involved in positive modulation of ascaroside pheromone biosynthesis in response to heat shock, perhaps by directly activating transcription of peroxisomal fatty acid beta-oxidation genes. Required in modulating the response to infection by either Gram-negative or Gram-positive bacteria, perhaps acting via regulation of expression of Hsp90/daf-21 and members of the small heat shock protein (HSP20) family. May play a role downstream of the daf-16/FOXO and daf-2 signaling pathway in response to bacterial pathogens. Modulates expression of multiple microRNA genes, in both heat shock-dependent and -independent manner. Independent of heat shock, required to modulate expression of genes involved in larval development, mainly distinct from HSPs; acts in concert with putative transcription factor efl-1/E2F, which may form part of a multiprotein DRM complex. Independent of heat shock, involved in promoting death of the linker cell, a male-specific cell which guides the elongation of the gonad; perhaps acting by modulating expression of ubiquitin-conjugating enzyme let-70. Plays a role in egg-laying. The sequence is that of Heat shock transcription factor hsf-1 from Caenorhabditis elegans.